The following is a 350-amino-acid chain: MALLRKINQVLLFLLIVTLCGILYKKVHKGTMLRNEADDDSETPEEMEDEIPVVICAAAGRMGAAMAAINSIYSNTDANILFYVVGLRNTLSRIRKWIEHSKLREINFKIVEFNPVVLKGKIRPDSSRPELLQPLNFVRFYLPLLIHQHEKVIYLDDDVIVQGDIQELYDTTLALGHAAAFSDDCDLPSSQDIHRLVGLQNTYMGYLDYRKKTIKDLGISPSTCSFNPGVIVANMTEWKHQRITKQLEKWMQKNVEENLYSSSLGGGVATSPMLIVFHGKYSTINPLWHIRHLGWNPDTRYSEHFLQEAKLLHWNGRHKPWDFPSVHNDLWESWFVPDPAGIFKLHHPNS.

Residues 1–6 are Cytoplasmic-facing; it reads MALLRK. A helical; Signal-anchor for type II membrane protein transmembrane segment spans residues 7 to 24; the sequence is INQVLLFLLIVTLCGILY. The Lumenal segment spans residues 25-349; the sequence is KKVHKGTMLR…AGIFKLHHPN (325 aa). N-linked (GlcNAc...) asparagine glycosylation is present at Asn234.

The protein belongs to the glycosyltransferase 8 family.

It is found in the membrane. The protein is Glycosyltransferase 8 domain-containing protein 2 (GLT8D2) of Bos taurus (Bovine).